The chain runs to 141 residues: Hemoglobin subunit alpha (141 aa).

The region spanning 1–141 is the Globin domain; the sequence is VLSPADKTNV…VSTVLTSKYR (141 aa). At serine 3 the chain carries Phosphoserine. Residue lysine 7 is modified to N6-succinyllysine. Phosphothreonine is present on threonine 8. Lysine 11 is subject to N6-succinyllysine. At lysine 16 the chain carries N6-acetyllysine; alternate. The residue at position 16 (lysine 16) is an N6-succinyllysine; alternate. A Phosphotyrosine modification is found at tyrosine 24. Serine 35 carries the post-translational modification Phosphoserine. Lysine 40 carries the N6-succinyllysine modification. Serine 49 is modified (phosphoserine). Histidine 58 provides a ligand contact to O2. Histidine 87 serves as a coordination point for heme b. Serine 102 is modified (phosphoserine). The residue at position 108 (threonine 108) is a Phosphothreonine. Serine 124 carries the phosphoserine modification. Threonine 134 and threonine 137 each carry phosphothreonine. Serine 138 carries the phosphoserine modification.

The protein belongs to the globin family. In terms of assembly, heterotetramer of two alpha chains and two beta chains. As to expression, red blood cells.

Involved in oxygen transport from the lung to the various peripheral tissues. Functionally, hemopressin acts as an antagonist peptide of the cannabinoid receptor CNR1. Hemopressin-binding efficiently blocks cannabinoid receptor CNR1 and subsequent signaling. The protein is Hemoglobin subunit alpha (HBA) of Lutra lutra (European river otter).